The sequence spans 360 residues: Nucleoporin SEH1 (360 aa).

6 WD repeats span residues 10–49 (DHKDLIHDVSFDFHGRRMATCSSDQSVKVWDKSESGDWHC), 55–96 (THSG…SNDK), 111–152 (DSRT…NLSQ), 160–210 (SCKL…RKYA), 217–258 (TVTD…KELT), and 276–315 (NHNSQVWRVSWNITGTVLASSGDDGCVRLWKANYMDNWKC). Residue Lys-12 forms a Glycyl lysine isopeptide (Lys-Gly) (interchain with G-Cter in SUMO2) linkage. 2 positions are modified to phosphoserine: Ser-179 and Ser-190. Over residues 324–354 (SPVNGSSQQGTSNPSLGSTIPSLQNSLNGSS) the composition is skewed to polar residues. The interval 324–360 (SPVNGSSQQGTSNPSLGSTIPSLQNSLNGSSAGRKHS) is disordered.

This sequence belongs to the WD repeat SEC13 family. Component of the Nup107-160 subcomplex of the nuclear pore complex (NPC). The Nup107-160 subcomplex includes NUP160, NUP133, NUP107, NUP98, NUP85, NUP43, NUP37, SEH1 and SEC13. The SEH1 subunit appears to be only weakly associated with the Nup107-160 subcomplex. Component of the GATOR2 subcomplex, composed of MIOS, SEC13, SEH1L, WDR24 and WDR59. The GATOR2 complex interacts with CASTOR1 and CASTOR2; the interaction is negatively regulated by arginine. The GATOR2 complex interacts with SESN1, SESN2 and SESN3; the interaction is negatively regulated by amino acids. SESN1, SESN2 and SESN3 convey leucine availability via direct interaction with SEH1L and WDR24.

It localises to the chromosome. The protein resides in the centromere. It is found in the kinetochore. Its subcellular location is the nucleus. The protein localises to the nuclear pore complex. It localises to the lysosome membrane. The GATOR2 complex is negatively regulated by the upstream amino acid sensors CASTOR1 and SESN2, which sequester the GATOR2 complex in absence of amino acids. In the presence of abundant amino acids, GATOR2 is released from CASTOR1 and SESN2 and activated. Functionally, component of the Nup107-160 subcomplex of the nuclear pore complex (NPC). The Nup107-160 subcomplex is required for the assembly of a functional NPC. The Nup107-160 subcomplex is also required for normal kinetochore microtubule attachment, mitotic progression and chromosome segregation. This subunit plays a role in recruitment of the Nup107-160 subcomplex to the kinetochore. As a component of the GATOR2 complex, functions as an activator of the amino acid-sensing branch of the mTORC1 signaling pathway. The GATOR2 complex indirectly activates mTORC1 through the inhibition of the GATOR1 subcomplex. GATOR2 probably acts as an E3 ubiquitin-protein ligase toward GATOR1. In the presence of abundant amino acids, the GATOR2 complex mediates ubiquitination of the NPRL2 core component of the GATOR1 complex, leading to GATOR1 inactivation. In the absence of amino acids, GATOR2 is inhibited, activating the GATOR1 complex. Within the GATOR2 complex, SEC13 and SEH1L are required to stabilize the complex. The polypeptide is Nucleoporin SEH1 (SEH1L) (Homo sapiens (Human)).